Reading from the N-terminus, the 162-residue chain is NADH-ubiquinone oxidoreductase 24 kDa subunit homolog C11E3.12, mitochondrial (162 aa).

[2Fe-2S] cluster-binding residues include Cys88, Cys93, Cys125, and Cys129.

This sequence belongs to the complex I 24 kDa subunit family. Requires [2Fe-2S] cluster as cofactor.

It is found in the mitochondrion. This chain is NADH-ubiquinone oxidoreductase 24 kDa subunit homolog C11E3.12, mitochondrial, found in Schizosaccharomyces pombe (strain 972 / ATCC 24843) (Fission yeast).